A 392-amino-acid chain; its full sequence is Neutrophil cytosol factor 1 (392 aa).

A PX domain is found at 4–125 (HFIRHIALLG…NFFKVRPDDL (122 aa)). 2 SH3 domains span residues 156 to 215 (IILQ…PLDS) and 226 to 285 (YAGE…KAGQ). Residues 290–392 (AKSQIKSRGA…STKRKLASAV (103 aa)) are disordered. 2 positions are modified to phosphoserine: serine 304 and serine 305. A compositionally biased stretch (basic residues) spans 310–319 (HSIHQRSRKR). Phosphoserine is present on residues serine 321, serine 329, and serine 348. Over residues 376-385 (ILHRCSESTK) the composition is skewed to basic and acidic residues.

Component of the phagocyte NADPH oxidase complex composed of an obligatory core heterodimer formed by the membrane proteins CYBA and CYBB and the cytosolic regulatory subunits NCF1/p47-phox, NCF2/p67-phox, NCF4/p40-phox and the small GTPase RAC1 or RAC2. Part of a cytosolic complex composed at least by NCF1, NCF2 and NCF4. Interacts (via C-terminus) with NCF2 (via the C-terminal SH3 domain). Interacts with NCF4. Interacts with CYBB. Interacts (via the second SH3 domain) with CYBA; interaction is phosphorylation-dependent. Interacts with NOXA1. Interacts with ADAM15. Interacts with TRAF4. Interacts with FASLG. Interacts with PARK7 (via C-terminus); the interaction is enhanced by LPS and modulates NCF1 phosphorylation and membrane translocation. Post-translationally, phosphorylated by PRKCD; phosphorylation induces activation of NCF1, leading to assembly and activation of the NADPH oxidase complex.

It is found in the cytoplasm. It localises to the cytosol. The protein resides in the membrane. Subunit of the phagocyte NADPH oxidase complex that mediates the transfer of electrons from cytosolic NADPH to O2 to produce the superoxide anion (O2(-)). In the activated complex, electrons are first transferred from NADPH to flavin adenine dinucleotide (FAD) and subsequently transferred via two heme molecules to molecular oxygen, producing superoxide through an outer-sphere reaction. Activation of the NADPH oxidase complex is initiated by the assembly of cytosolic subunits of the NADPH oxidase complex with the core NADPH oxidase complex to form a complex at the plasma membrane or phagosomal membrane. This activation process is initiated by phosphorylation dependent binding of the cytosolic NCF1/p47-phox subunit to the C-terminus of CYBA/p22-phox. This Bos taurus (Bovine) protein is Neutrophil cytosol factor 1.